Consider the following 203-residue polypeptide: FMN-dependent NADH:quinone oxidoreductase (203 aa).

Residues Ser-9, 15–17 (SVS), and 138–141 (SRGG) each bind FMN.

The protein belongs to the azoreductase type 1 family. In terms of assembly, homodimer. Requires FMN as cofactor.

The catalysed reaction is 2 a quinone + NADH + H(+) = 2 a 1,4-benzosemiquinone + NAD(+). It carries out the reaction N,N-dimethyl-1,4-phenylenediamine + anthranilate + 2 NAD(+) = 2-(4-dimethylaminophenyl)diazenylbenzoate + 2 NADH + 2 H(+). In terms of biological role, quinone reductase that provides resistance to thiol-specific stress caused by electrophilic quinones. Its function is as follows. Also exhibits azoreductase activity. Catalyzes the reductive cleavage of the azo bond in aromatic azo compounds to the corresponding amines. The polypeptide is FMN-dependent NADH:quinone oxidoreductase (Methylorubrum populi (strain ATCC BAA-705 / NCIMB 13946 / BJ001) (Methylobacterium populi)).